Consider the following 537-residue polypeptide: Membrane protein insertase YidC (537 aa).

5 helical membrane passes run 6–26 (SLLALALLFISFLVYQQWEID), 341–363 (LVSNWGLAIIGVTLVVKAILYPL), 411–431 (LGGCLPLLIQMPIFIALYWTF), 449–469 (LSAQDPYYILPLLMGGSMFLL), and 490–510 (PVIFTVFFLWFPAGLVLYWLV).

This sequence belongs to the OXA1/ALB3/YidC family. Type 1 subfamily. In terms of assembly, interacts with the Sec translocase complex via SecD. Specifically interacts with transmembrane segments of nascent integral membrane proteins during membrane integration.

Its subcellular location is the cell inner membrane. Functionally, required for the insertion and/or proper folding and/or complex formation of integral membrane proteins into the membrane. Involved in integration of membrane proteins that insert both dependently and independently of the Sec translocase complex, as well as at least some lipoproteins. Aids folding of multispanning membrane proteins. The chain is Membrane protein insertase YidC from Actinobacillus succinogenes (strain ATCC 55618 / DSM 22257 / CCUG 43843 / 130Z).